Here is a 559-residue protein sequence, read N- to C-terminus: Tissue-type plasminogen activator (559 aa).

Residues 1–17 (MKGELLCVLLLCGVAFT) form the signal peptide. Positions 18-29 (LPDQGIHRRFRR) are excised as a propeptide. Positions 30-32 (GAR) are cleaved as a propeptide — removed by plasmin. The region spanning 36 to 78 (ATCRDEQTQTTYQQHQSWLRPMLRGNRVEYCRCNSGLAQCHSV) is the Fibronectin type-I domain. 17 disulfides stabilise this stretch: Cys-38/Cys-68, Cys-66/Cys-75, Cys-83/Cys-94, Cys-88/Cys-105, Cys-107/Cys-116, Cys-124/Cys-205, Cys-145/Cys-187, Cys-176/Cys-200, Cys-213/Cys-294, Cys-234/Cys-276, Cys-265/Cys-289, Cys-297/Cys-428, Cys-340/Cys-356, Cys-348/Cys-417, Cys-442/Cys-516, Cys-474/Cys-490, and Cys-506/Cys-534. The important for binding to annexin A2 stretch occupies residues 39–49 (RDEQTQTTYQQ). The EGF-like domain maps to 79-117 (PVRSCSEPRCFNGGTCQQALYFSDFVCQCPDGFVGKRCD). 2 Kringle domains span residues 124 to 205 (CFEG…TPAC) and 213 to 294 (CYVG…MSPC). N-linked (GlcNAc...) asparagine glycosylation is present at Asn-149. Positions 309-558 (IKGGLFTDIT…YLNWIQDNMK (250 aa)) constitute a Peptidase S1 domain. Residues His-355 and Asp-404 each act as charge relay system in the active site. Asn-481 is a glycosylation site (N-linked (GlcNAc...) asparagine). Ser-510 functions as the Charge relay system in the catalytic mechanism.

The protein belongs to the peptidase S1 family. In terms of assembly, heterodimer of chain A and chain B held by a disulfide bond. Binds to fibrin with high affinity. This interaction leads to an increase in the catalytic efficiency of the enzyme due to an increase in affinity for plasminogen. Similarly, binding to heparin increases the activation of plasminogen. Binds to annexin A2, cytokeratin-8, fibronectin and laminin. Binds to mannose receptor and the low-density lipoprotein receptor-related protein (LRP1); these proteins are involved in TPA clearance. Binds LRP1B; binding is followed by internalization and degradation. Forms heterodimer with SERPINA5. Interacts with SERPINE1. In complex with SERPINE1, interacts with SORL1. In terms of processing, the single chain, almost fully active enzyme, can be further processed into a two-chain fully active form by a cleavage after Arg-308 catalyzed by plasmin, tissue kallikrein or factor Xa.

It localises to the secreted. Its subcellular location is the extracellular space. It catalyses the reaction Specific cleavage of Arg-|-Val bond in plasminogen to form plasmin.. With respect to regulation, inhibited by SERPINA5. Inhibited by SERPINE1. Its function is as follows. Converts the abundant, but inactive, zymogen plasminogen to plasmin by hydrolyzing a single Arg-Val bond in plasminogen. By controlling plasmin-mediated proteolysis, it plays an important role in tissue remodeling and degradation, in cell migration and many other physiopathological events. During oocyte activation, plays a role in cortical granule reaction in the zona reaction, which contributes to the block to polyspermy. This is Tissue-type plasminogen activator (Plat) from Rattus norvegicus (Rat).